We begin with the raw amino-acid sequence, 397 residues long: Probable pyruvate dehydrogenase E1 component subunit alpha, mitochondrial (397 aa).

His-86, Tyr-112, Arg-113, Gly-159, Val-161, Asp-190, Gly-191, Ala-192, and Asn-219 together coordinate pyruvate. Thiamine diphosphate contacts are provided by Tyr-112, Arg-113, Gly-159, Val-161, Asp-190, Gly-191, Ala-192, Asn-219, and His-286. Asp-190 provides a ligand contact to Mg(2+). Mg(2+) is bound at residue Asn-219.

Tetramer of 2 alpha and 2 beta subunits. Thiamine diphosphate is required as a cofactor. Mg(2+) serves as cofactor.

The protein localises to the mitochondrion matrix. It carries out the reaction N(6)-[(R)-lipoyl]-L-lysyl-[protein] + pyruvate + H(+) = N(6)-[(R)-S(8)-acetyldihydrolipoyl]-L-lysyl-[protein] + CO2. E1 activity is regulated by phosphorylation (inactivation) and dephosphorylation (activation) of the alpha subunit. Its function is as follows. The pyruvate dehydrogenase complex catalyzes the overall conversion of pyruvate to acetyl-CoA and CO(2). It contains multiple copies of three enzymatic components: pyruvate dehydrogenase (E1), dihydrolipoamide acetyltransferase (E2) and lipoamide dehydrogenase (E3). The chain is Probable pyruvate dehydrogenase E1 component subunit alpha, mitochondrial from Caenorhabditis elegans.